A 134-amino-acid chain; its full sequence is Crustacean hyperglycemic hormones isoform B (134 aa).

An N-terminal signal peptide occupies residues 1-24; sequence MFACRTLCLVVVMVASLGTSGVGG. Gln61 is subject to Pyrrolidone carboxylic acid. Position 63 is a D-phenylalanine; in form CHH-B-II (Phe63). Intrachain disulfides connect Cys67/Cys103, Cys83/Cys99, and Cys86/Cys112. Val132 is modified (valine amide).

This sequence belongs to the arthropod CHH/MIH/GIH/VIH hormone family. In terms of processing, stereoinversion of L-Phe (form CHH-B-I) to D-Phe (form CHH-B-II). Produced by the medulla terminalis X-organ in the eyestalks and transported to the sinus gland where they are stored and released. Present also in the ventral nervous system.

It is found in the secreted. In terms of biological role, hormone found in the sinus gland of isopods and decapods which controls the blood sugar level. Has a secretagogue action over the amylase released from the midgut gland. May act as a stress hormone and may be involved in the control of molting and reproduction. This chain is Crustacean hyperglycemic hormones isoform B, found in Homarus americanus (American lobster).